We begin with the raw amino-acid sequence, 810 residues long: Hemoglobin-haptoglobin utilization protein B (810 aa).

An N-terminal signal peptide occupies residues 1-22 (MPIPFKPVLAAAAIAQAFPAFA). Positions 34 to 166 (NEITVTGTHK…LGGAVNYQTK (133 aa)) constitute a TBDR plug domain. The region spanning 175-810 (DKPYHLGIKG…SYNFTIEAKF (636 aa)) is the TBDR beta-barrel domain. Residues 793 to 810 (QRFTSPGRSYNFTIEAKF) carry the TonB C-terminal box motif.

The protein belongs to the TonB-dependent receptor family.

Its subcellular location is the cell outer membrane. In terms of biological role, acts as a receptor for hemoglobin or the hemoglobin/haptoglobin complex and is required for heme uptake. This Neisseria meningitidis serogroup A / serotype 4A (strain DSM 15465 / Z2491) protein is Hemoglobin-haptoglobin utilization protein B (hpuB).